We begin with the raw amino-acid sequence, 1220 residues long: MAILNELYPSVPYNVLAYTPPSFLPDAGTQATPADLTAYEQLLKNLEKGINAGTYSKAIADVLKGIFIDDTINYQTYVNIGLSLITLAVPEIGIFTPFIGLFFAALNKHDAPPPPNAKDIFEAMKPAIQEMIDRTLTADEQTFLNGEISGLQNLAARYQSTMDDIQSHGGFNKVDSGLIKKFTDEVLSLNSFYTDRLPVFITDNTADRTLLGLPYYAILASMHLMLLRDIITKGPTWDSKINFTPDAIDSFKTDIKNNIKLYSKTIYDVFQKGLASYGTPSDLESFAKKKKYIEIMTTHCLDFARLFPTFDPDLYPTGSGDISLQKTRRILSPFIPIRTADGLTLNNTSIDTSNWPNYENGNGAFPNPKERILKQFKLYPSWRAGQYGGLLQPYLWAIEVQDSVETRLYGQLPAVDPQAGPNYVSIDSSNPIIQINMDTWKTPPQGASGWNTNLMRGSVSGLSFLQRDGTRLSAGMGGGFADTIYSLPATHYLSYLYGTPYQTSDNYSGHVGALVGVSTPQEATLPNIIGQPDEQGNVSTMGFPFEKASYGGTVVKEWLNGANAMKLSPGQSIGIPITNVTKHNYQVRCRYASNSDNPVFFNVDTGGANPIFQQINFASTVDSNMGVKEENGVYVVKSIKTVEIPAGSFYVHVTNQGSSDLFLDRIEFVPKIQFQFCDNNNLHCDCNNPVDTDCTFCCVCTSLTDCDCNNPRGIDCTLCCQVENQLPSFVTLTDLRNITSQVNGLFAPGTQNRLAQNISDHDIEEVVLKVDALSDEIFGTNKKALRKLVNQAKRLSRARNLLIGGSFENWDAWYKGRNVVTVSDHELFKSDHVLLPPPGLSPSYIFQKVEESKLKANTRYTVSGFIAHATDLEIVVSRYGQEIKKVVQVPYGEAFPLTSSGPVCCIPHSTSNGTLGNPHFFSYSIDVGALDVDTNPGIEFGLRIVNPTGMARVSNLEIREDRPLAANEIRQVQRVARNWRTEYEKERAEVTSLIQPVINRINGLYENENWNGSIRSDISYQNIDAIVLPTLPTLRHWFMSDRFSEQGDIMAKFQGALNRAYAQLEQSTLLHNGHFTKDAANWTIEGDAHQITLEDGRRVLRLPDWSSSVSQMIEIENFNPDKEYNLVFHGQGEGTVTLEHGEETKYIETHTHHFANFTTSQRQGLTFESNKVTVTISSEDGEFLVDNIALVEAPLPTDDQNSEGNTAFSTNSDTSMNNNQ.

The segment at 1194-1220 (PLPTDDQNSEGNTAFSTNSDTSMNNNQ) is disordered. The span at 1198-1220 (DDQNSEGNTAFSTNSDTSMNNNQ) shows a compositional bias: polar residues.

The protein belongs to the delta endotoxin family.

Promotes colloidosmotic lysis by binding to the midgut epithelial cells of hymenopteran species. This is Pesticidal crystal protein Cry5Ac (cry5Ac) from Bacillus thuringiensis.